Reading from the N-terminus, the 157-residue chain is Protein Smg (157 aa).

This sequence belongs to the Smg family.

This Escherichia coli O6:H1 (strain CFT073 / ATCC 700928 / UPEC) protein is Protein Smg.